Consider the following 704-residue polypeptide: Elongation factor G 1 (704 aa).

A tr-type G domain is found at 8-290 (ERYRNIGICA…CVVEYMPAPT (283 aa)). GTP is bound by residues 17 to 24 (AHVDAGKT), 88 to 92 (DTPGH), and 142 to 145 (NKMD).

Belongs to the TRAFAC class translation factor GTPase superfamily. Classic translation factor GTPase family. EF-G/EF-2 subfamily.

The protein resides in the cytoplasm. Functionally, catalyzes the GTP-dependent ribosomal translocation step during translation elongation. During this step, the ribosome changes from the pre-translocational (PRE) to the post-translocational (POST) state as the newly formed A-site-bound peptidyl-tRNA and P-site-bound deacylated tRNA move to the P and E sites, respectively. Catalyzes the coordinated movement of the two tRNA molecules, the mRNA and conformational changes in the ribosome. The sequence is that of Elongation factor G 1 from Pseudoalteromonas translucida (strain TAC 125).